The primary structure comprises 358 residues: Peptide chain release factor 1 (358 aa).

Q233 carries the post-translational modification N5-methylglutamine. Residues 286–309 (AELASARKSQVGTGDRSERIRTYN) are disordered.

Belongs to the prokaryotic/mitochondrial release factor family. Post-translationally, methylated by PrmC. Methylation increases the termination efficiency of RF1.

Its subcellular location is the cytoplasm. In terms of biological role, peptide chain release factor 1 directs the termination of translation in response to the peptide chain termination codons UAG and UAA. This Carboxydothermus hydrogenoformans (strain ATCC BAA-161 / DSM 6008 / Z-2901) protein is Peptide chain release factor 1.